The sequence spans 316 residues: Pantothenate kinase (316 aa).

95 to 102 (GSVAVGKS) contacts ATP.

Belongs to the prokaryotic pantothenate kinase family.

It is found in the cytoplasm. The catalysed reaction is (R)-pantothenate + ATP = (R)-4'-phosphopantothenate + ADP + H(+). The protein operates within cofactor biosynthesis; coenzyme A biosynthesis; CoA from (R)-pantothenate: step 1/5. In Salmonella choleraesuis (strain SC-B67), this protein is Pantothenate kinase.